A 231-amino-acid chain; its full sequence is Flagellar L-ring protein (231 aa).

A signal peptide spans 1–18; it reads MNRLLSVFALGGAVLLAG. Cys-19 carries the N-palmitoyl cysteine lipid modification. Cys-19 carries the S-diacylglycerol cysteine lipid modification.

Belongs to the FlgH family. The basal body constitutes a major portion of the flagellar organelle and consists of four rings (L,P,S, and M) mounted on a central rod.

The protein localises to the cell outer membrane. It is found in the bacterial flagellum basal body. Assembles around the rod to form the L-ring and probably protects the motor/basal body from shearing forces during rotation. The chain is Flagellar L-ring protein from Pseudomonas putida (strain ATCC 700007 / DSM 6899 / JCM 31910 / BCRC 17059 / LMG 24140 / F1).